The chain runs to 488 residues: Ankyrin repeat domain-containing protein 13C (488 aa).

The segment at 1 to 60 is disordered; that stretch reads MTGEKIRSVRKERKSGLDLLEPDEEPAATGPAKHRGSKIFSGGNHRISRSSSSPGDPDGA. Residues 41–59 are compositionally biased toward low complexity; that stretch reads SGGNHRISRSSSSPGDPDG. ANK repeat units follow at residues 58–87, 90–119, and 123–152; these read DGAY…IAQK, HGNT…PVKV, and QGWS…QQSR.

It is found in the endoplasmic reticulum membrane. Functionally, acts as a molecular chaperone for G protein-coupled receptors, regulating their biogenesis and exit from the ER. The sequence is that of Ankyrin repeat domain-containing protein 13C (ankrd13c) from Danio rerio (Zebrafish).